Reading from the N-terminus, the 265-residue chain is 5'-nucleotidase SurE (265 aa).

A divalent metal cation contacts are provided by D9, D10, S40, and N96.

It belongs to the SurE nucleotidase family. A divalent metal cation is required as a cofactor.

It localises to the cytoplasm. The catalysed reaction is a ribonucleoside 5'-phosphate + H2O = a ribonucleoside + phosphate. Nucleotidase that shows phosphatase activity on nucleoside 5'-monophosphates. This chain is 5'-nucleotidase SurE, found in Methanothrix thermoacetophila (strain DSM 6194 / JCM 14653 / NBRC 101360 / PT) (Methanosaeta thermophila).